The following is a 384-amino-acid chain: MADKKSPLIAVSVGEASGDLLGAHLIRAIRKRCPQARFTGIGGELMKAEGFESLYDQERLAVRGFVEVVRRLPEILRIRRGLVRDLLSLKPDVFVGIDAPDFNLGVAEKLKRSGIPTVHYVSPSVWAWRRERVGKIVHQVNRVLCLFPMEPQLYLDAGGRAEFVGHPMAQLMPLEDDRETARQTLGVDAGIPVFALLPGSRVSEIDYMAPVFFQTALLLLERYPAARFLLPAATEATKRRLAEVLQRPEFAGLPLTVIDRQSETVCRAADAVLVTSGTATLEVALCKRPMVISYKISPLTYAYVKRKIKVPHVGLPNILLGKEAVPELLQSEAKPEKLAAALADWYEHPDKVAALQQDFRALHLLLKKDTADLAARAVLEEAGC.

This sequence belongs to the LpxB family.

The catalysed reaction is a lipid X + a UDP-2-N,3-O-bis[(3R)-3-hydroxyacyl]-alpha-D-glucosamine = a lipid A disaccharide + UDP + H(+). The protein operates within bacterial outer membrane biogenesis; LPS lipid A biosynthesis. Its function is as follows. Condensation of UDP-2,3-diacylglucosamine and 2,3-diacylglucosamine-1-phosphate to form lipid A disaccharide, a precursor of lipid A, a phosphorylated glycolipid that anchors the lipopolysaccharide to the outer membrane of the cell. This Neisseria meningitidis serogroup B (strain ATCC BAA-335 / MC58) protein is Lipid-A-disaccharide synthase (lpxB).